The following is a 218-amino-acid chain: GTP cyclohydrolase 1 (218 aa).

The Zn(2+) site is built by Cys111, His114, and Cys182.

It belongs to the GTP cyclohydrolase I family. As to quaternary structure, toroid-shaped homodecamer, composed of two pentamers of five dimers.

It catalyses the reaction GTP + H2O = 7,8-dihydroneopterin 3'-triphosphate + formate + H(+). It participates in cofactor biosynthesis; 7,8-dihydroneopterin triphosphate biosynthesis; 7,8-dihydroneopterin triphosphate from GTP: step 1/1. This is GTP cyclohydrolase 1 from Buchnera aphidicola subsp. Schizaphis graminum (strain Sg).